We begin with the raw amino-acid sequence, 173 residues long: Crossover junction endodeoxyribonuclease RuvC (173 aa).

Residues aspartate 8, glutamate 67, and aspartate 139 contribute to the active site. Mg(2+) contacts are provided by aspartate 8, glutamate 67, and aspartate 139.

It belongs to the RuvC family. In terms of assembly, homodimer which binds Holliday junction (HJ) DNA. The HJ becomes 2-fold symmetrical on binding to RuvC with unstacked arms; it has a different conformation from HJ DNA in complex with RuvA. In the full resolvosome a probable DNA-RuvA(4)-RuvB(12)-RuvC(2) complex forms which resolves the HJ. Mg(2+) serves as cofactor.

The protein localises to the cytoplasm. The catalysed reaction is Endonucleolytic cleavage at a junction such as a reciprocal single-stranded crossover between two homologous DNA duplexes (Holliday junction).. Functionally, the RuvA-RuvB-RuvC complex processes Holliday junction (HJ) DNA during genetic recombination and DNA repair. Endonuclease that resolves HJ intermediates. Cleaves cruciform DNA by making single-stranded nicks across the HJ at symmetrical positions within the homologous arms, yielding a 5'-phosphate and a 3'-hydroxyl group; requires a central core of homology in the junction. The consensus cleavage sequence is 5'-(A/T)TT(C/G)-3'. Cleavage occurs on the 3'-side of the TT dinucleotide at the point of strand exchange. HJ branch migration catalyzed by RuvA-RuvB allows RuvC to scan DNA until it finds its consensus sequence, where it cleaves and resolves the cruciform DNA. The polypeptide is Crossover junction endodeoxyribonuclease RuvC (Shewanella sediminis (strain HAW-EB3)).